A 199-amino-acid chain; its full sequence is MAIEYVESSKLPTAWGMFEMHGFTDSETDKEHLVLSMGDLAGDEPVLVRIHSECLTGDALFSLRCDCGAQLQAAMHRISIEGRGAIFYLRQEGRGIGLVNKIRAYHLQDKGADTVEANEALGFGADMRDYSMLKPMFEKMGISRVKLMTNNPRKIDALIGLGIDIAERLPHETGRNPHNSHYLETKRGKLGHLLEGDSE.

Position 49–53 (49–53 (RIHSE)) interacts with GTP. Positions 54, 65, and 67 each coordinate Zn(2+). GTP-binding positions include Gln-70, 92–94 (EGR), and Thr-114. Residue Asp-126 is the Proton acceptor of the active site. The active-site Nucleophile is the Arg-128. Residues Thr-149 and Lys-154 each contribute to the GTP site. The segment at 172-199 (ETGRNPHNSHYLETKRGKLGHLLEGDSE) is disordered.

The protein belongs to the GTP cyclohydrolase II family. Requires Zn(2+) as cofactor.

The catalysed reaction is GTP + 4 H2O = 2,5-diamino-6-hydroxy-4-(5-phosphoribosylamino)-pyrimidine + formate + 2 phosphate + 3 H(+). It participates in cofactor biosynthesis; riboflavin biosynthesis; 5-amino-6-(D-ribitylamino)uracil from GTP: step 1/4. In terms of biological role, catalyzes the conversion of GTP to 2,5-diamino-6-ribosylamino-4(3H)-pyrimidinone 5'-phosphate (DARP), formate and pyrophosphate. The chain is GTP cyclohydrolase-2 from Teredinibacter turnerae (strain ATCC 39867 / T7901).